The chain runs to 274 residues: MVGRRALIVLAHSERTSFNYAMKEAAVAALKKKGWEVVESDLYAMNFNPIISRKDITGKLKDPENFQYPAESVLAYKEGHLSPDIVAEQKKLEAADLVIFQFPLQWFGVPAILKGWFERVFVGEFAYTYAAMYDKGPFRSKKAVLSITTGGSGSMYSLQGIHGDMNVILWPIQSGILHFCGFQVLEPQLTYSIGHTPADARIQILEGWKKRLENIWDETPLYFAPSSLFDLNFQAGFLMKKEVQDEEKNKKFGLSVGHHLGKSIPTDNQIKARK.

Residues His-12, 18-19 (FN), and Gln-67 contribute to the FAD site. Ser-82 carries the post-translational modification Phosphoserine. An FAD-binding site is contributed by 104–107 (LQWF). 126 to 128 (AYT) lines the substrate pocket. FAD contacts are provided by residues 148–151 (TTGG), Tyr-156, and Arg-201. The interval 225–274 (PSSLFDLNFQAGFLMKKEVQDEEKNKKFGLSVGHHLGKSIPTDNQIKARK) is important for apoenzyme conformational stability. Glycyl lysine isopeptide (Lys-Gly) (interchain with G-Cter in SUMO2) cross-links involve residues Lys-250 and Lys-251.

This sequence belongs to the NAD(P)H dehydrogenase (quinone) family. In terms of assembly, homodimer. Interacts with PDLIM4 isoform 2; this interaction stabilizes PDLIM4 isoform 2 in response to oxidative stress and protects it from ubiquitin-independent degradation by the core 20S proteasome. Interacts with TP73 (via SAM domain); this interaction is NADH-dependent, stabilizes TP73 in response to oxidative stress and protects it from ubiquitin-independent degradation by the 20S proteasome. Interacts with TP53; this interaction is NADH-dependent, stabilizes TP53 in response to oxidative stress and protects it from ubiquitin-independent degradation by the 20S proteasome. It depends on FAD as a cofactor.

It is found in the cytoplasm. The protein localises to the cytosol. The enzyme catalyses a quinone + NADH + H(+) = a quinol + NAD(+). The catalysed reaction is a quinone + NADPH + H(+) = a quinol + NADP(+). It catalyses the reaction ubiquinone-10 + NADH + H(+) = ubiquinol-10 + NAD(+). It carries out the reaction menadione + NADH + H(+) = menadiol + NAD(+). Flavin-containing quinone reductase that catalyzes two-electron reduction of quinones to hydroquinones using either NADH or NADPH as electron donors. In a ping-pong kinetic mechanism, the electrons are sequentially transferred from NAD(P)H to flavin cofactor and then from reduced flavin to the quinone, bypassing the formation of semiquinone and reactive oxygen species. Regulates cellular redox state primarily through quinone detoxification. Reduces components of plasma membrane redox system such as coenzyme Q and vitamin quinones, producing antioxidant hydroquinone forms. In the process may function as superoxide scavenger to prevent hydroquinone oxidation and facilitate excretion. Alternatively, can activate quinones and their derivatives by generating redox reactive hydroquinones with DNA cross-linking antitumor potential. Acts as a gatekeeper of the core 20S proteasome known to degrade proteins with unstructured regions. Upon oxidative stress, interacts with tumor suppressors TP53 and TP73 in a NADH-dependent way and inhibits their ubiquitin-independent degradation by the 20S proteasome. The sequence is that of NAD(P)H dehydrogenase [quinone] 1 (NQO1) from Pongo abelii (Sumatran orangutan).